A 291-amino-acid chain; its full sequence is Nucleotide-binding protein jk1004 (291 aa).

16-23 serves as a coordination point for ATP; the sequence is GMSGAGRR. 67–70 serves as a coordination point for GTP; that stretch reads DVRS.

Belongs to the RapZ-like family.

In terms of biological role, displays ATPase and GTPase activities. In Corynebacterium jeikeium (strain K411), this protein is Nucleotide-binding protein jk1004.